A 317-amino-acid polypeptide reads, in one-letter code: Melanocyte-stimulating hormone receptor (317 aa).

At 1 to 37 (MPVQGSQRRLLGSLNSTPTATPRLGLAANQTGARCLE) the chain is on the extracellular side. N29 carries N-linked (GlcNAc...) asparagine glycosylation. Residues 38–63 (VSIPDGLFLSLGLVSLVENVLVVVAI) traverse the membrane as a helical segment. At 64–72 (ARNRNLHSP) the chain is on the cytoplasmic side. Residues 73 to 93 (MYCFICCLALSDLLVSGSNML) traverse the membrane as a helical segment. Over 94-118 (ETAVFLLLEAGALAARAAVVQQLDN) the chain is Extracellular. The helical transmembrane segment at 119 to 140 (VIDVITCSSMLSSLCFLGAIAV) threads the bilayer. Over 141 to 163 (DRYISIFYALRYHSIVTLRRARR) the chain is Cytoplasmic. A helical transmembrane segment spans residues 164 to 183 (VVAAIWVASVLFSTLFIAYC). At 184 to 191 (DHAAVLLC) the chain is on the extracellular side. Residues 192–211 (LVVFFLAMLVLMAVLYVHML) form a helical membrane-spanning segment. Residues 212–240 (ARACQHAQGIAQLHKRQRPAHQGVGLKGA) are Cytoplasmic-facing. A helical transmembrane segment spans residues 241-266 (ATLTILLGIFFLCWGPFFLHLTLIVL). Residues 267–279 (CPQHPTCSCIFKN) are Extracellular-facing. The chain crosses the membrane as a helical span at residues 280–300 (FNLFLTLIICNAIIDPLIYAF). The Cytoplasmic segment spans residues 301 to 317 (RSQELRRTLKKVLLCSW). C315 is lipidated: S-palmitoyl cysteine.

It belongs to the G-protein coupled receptor 1 family. In terms of assembly, interacts with MGRN1, but does not undergo MGRN1-mediated ubiquitination; this interaction competes with GNAS-binding and thus inhibits agonist-induced cAMP production. Interacts with OPN3; the interaction results in a decrease in MC1R-mediated cAMP signaling and ultimately a decrease in melanin production in melanocytes.

It localises to the cell membrane. Functionally, receptor for MSH (alpha, beta and gamma) and ACTH. The activity of this receptor is mediated by G proteins which activate adenylate cyclase. Mediates melanogenesis, the production of eumelanin (black/brown) and phaeomelanin (red/yellow), via regulation of cAMP signaling in melanocytes. This Trachypithecus obscurus (Dusky leaf-monkey) protein is Melanocyte-stimulating hormone receptor (MC1R).